We begin with the raw amino-acid sequence, 237 residues long: Ribonuclease PH (237 aa).

Phosphate is bound by residues Arg86 and 124–126; that span reads GTR.

Belongs to the RNase PH family. Homohexameric ring arranged as a trimer of dimers.

The enzyme catalyses tRNA(n+1) + phosphate = tRNA(n) + a ribonucleoside 5'-diphosphate. Functionally, phosphorolytic 3'-5' exoribonuclease that plays an important role in tRNA 3'-end maturation. Removes nucleotide residues following the 3'-CCA terminus of tRNAs; can also add nucleotides to the ends of RNA molecules by using nucleoside diphosphates as substrates, but this may not be physiologically important. Probably plays a role in initiation of 16S rRNA degradation (leading to ribosome degradation) during starvation. The sequence is that of Ribonuclease PH from Idiomarina loihiensis (strain ATCC BAA-735 / DSM 15497 / L2-TR).